Consider the following 178-residue polypeptide: NAD(P)H-quinone oxidoreductase subunit 6, chloroplastic (178 aa).

5 helical membrane passes run 10 to 30 (FILV…VLFT), 32 to 52 (PIYS…FYIL), 61 to 81 (AQLL…VMFM), 94 to 114 (LWTI…FSLI), and 154 to 174 (FFLP…GAIA).

This sequence belongs to the complex I subunit 6 family. As to quaternary structure, NDH is composed of at least 16 different subunits, 5 of which are encoded in the nucleus.

The protein localises to the plastid. Its subcellular location is the chloroplast thylakoid membrane. It catalyses the reaction a plastoquinone + NADH + (n+1) H(+)(in) = a plastoquinol + NAD(+) + n H(+)(out). It carries out the reaction a plastoquinone + NADPH + (n+1) H(+)(in) = a plastoquinol + NADP(+) + n H(+)(out). NDH shuttles electrons from NAD(P)H:plastoquinone, via FMN and iron-sulfur (Fe-S) centers, to quinones in the photosynthetic chain and possibly in a chloroplast respiratory chain. The immediate electron acceptor for the enzyme in this species is believed to be plastoquinone. Couples the redox reaction to proton translocation, and thus conserves the redox energy in a proton gradient. The polypeptide is NAD(P)H-quinone oxidoreductase subunit 6, chloroplastic (ndhG) (Citrus sinensis (Sweet orange)).